Reading from the N-terminus, the 222-residue chain is Large ribosomal subunit protein uL11c (222 aa).

Residues 1–20 (MASSSLSTLCSSTSSSLHPN) form a disordered region. The N-terminal 62 residues, 1 to 62 (MASSSLSTLC…TPRFLTVIAM (62 aa)), are a transit peptide targeting the chloroplast.

The protein belongs to the universal ribosomal protein uL11 family. In terms of assembly, part of the ribosomal stalk of the 50S ribosomal subunit. Interacts with L10 and the large rRNA to form the base of the stalk. L10 forms an elongated spine to which L12 dimers bind in a sequential fashion forming a multimeric L10(L12)X complex.

The protein resides in the plastid. It localises to the chloroplast. In terms of biological role, forms part of the ribosomal stalk which helps the ribosome interact with GTP-bound translation factors. This Arabidopsis thaliana (Mouse-ear cress) protein is Large ribosomal subunit protein uL11c (RPL11).